Here is a 969-residue protein sequence, read N- to C-terminus: Leucine--tRNA ligase (969 aa).

Residues 1 to 23 (MTESPTTSPATGSGAAAPDSDAP) form a disordered region. The 'HIGH' region motif lies at 78–89 (PYPSGEGLHVGH). The 'KMSKS' region motif lies at 737-741 (KIGKS). Lys-740 provides a ligand contact to ATP.

It belongs to the class-I aminoacyl-tRNA synthetase family.

Its subcellular location is the cytoplasm. The enzyme catalyses tRNA(Leu) + L-leucine + ATP = L-leucyl-tRNA(Leu) + AMP + diphosphate. This is Leucine--tRNA ligase from Mycobacterium avium (strain 104).